A 479-amino-acid polypeptide reads, in one-letter code: ATP synthase subunit beta (479 aa).

An ATP-binding site is contributed by 160-167 (GGAGVGKT).

Belongs to the ATPase alpha/beta chains family. In terms of assembly, F-type ATPases have 2 components, CF(1) - the catalytic core - and CF(0) - the membrane proton channel. CF(1) has five subunits: alpha(3), beta(3), gamma(1), delta(1), epsilon(1). CF(0) has three main subunits: a(1), b(2) and c(9-12). The alpha and beta chains form an alternating ring which encloses part of the gamma chain. CF(1) is attached to CF(0) by a central stalk formed by the gamma and epsilon chains, while a peripheral stalk is formed by the delta and b chains.

It is found in the cell inner membrane. It catalyses the reaction ATP + H2O + 4 H(+)(in) = ADP + phosphate + 5 H(+)(out). Functionally, produces ATP from ADP in the presence of a proton gradient across the membrane. The catalytic sites are hosted primarily by the beta subunits. This is ATP synthase subunit beta from Anaplasma phagocytophilum (strain HZ).